Consider the following 308-residue polypeptide: Ribosomal RNA large subunit methyltransferase F (308 aa).

This sequence belongs to the methyltransferase superfamily. METTL16/RlmF family.

The protein localises to the cytoplasm. The enzyme catalyses adenosine(1618) in 23S rRNA + S-adenosyl-L-methionine = N(6)-methyladenosine(1618) in 23S rRNA + S-adenosyl-L-homocysteine + H(+). Specifically methylates the adenine in position 1618 of 23S rRNA. In Shigella flexneri serotype 5b (strain 8401), this protein is Ribosomal RNA large subunit methyltransferase F.